Consider the following 140-residue polypeptide: 3-hydroxyacyl-[acyl-carrier-protein] dehydratase FabZ (140 aa).

The active site involves H47.

Belongs to the thioester dehydratase family. FabZ subfamily.

The protein localises to the cytoplasm. The catalysed reaction is a (3R)-hydroxyacyl-[ACP] = a (2E)-enoyl-[ACP] + H2O. Its function is as follows. Involved in unsaturated fatty acids biosynthesis. Catalyzes the dehydration of short chain beta-hydroxyacyl-ACPs and long chain saturated and unsaturated beta-hydroxyacyl-ACPs. The protein is 3-hydroxyacyl-[acyl-carrier-protein] dehydratase FabZ of Streptococcus pneumoniae serotype 2 (strain D39 / NCTC 7466).